The following is a 360-amino-acid chain: Terpene synthase 5 (360 aa).

Residues 87-92 (DDFLER) carry the DDxx(x)D/E motif motif. The NDxxSxxxD/E motif signature appears at 237-245 (NDCVSYAKE).

This sequence belongs to the terpene synthase family.

Its function is as follows. Terpene synthase that converts its substrate farnesyl diphosphate (FPP) into 2 yet unidentified sesquiterpenes. This chain is Terpene synthase 5, found in Dictyostelium purpureum (Slime mold).